A 201-amino-acid polypeptide reads, in one-letter code: Small ribosomal subunit protein uS4c (201 aa).

A disordered region spans residues 15-43; sequence LGALPGLTRKTPKSGSNQKKKFHSGKKEQ. Positions 89-150 constitute an S4 RNA-binding domain; sequence MRLDNILFRL…NQRSKRLVQN (62 aa).

Belongs to the universal ribosomal protein uS4 family. As to quaternary structure, part of the 30S ribosomal subunit. Contacts protein S5. The interaction surface between S4 and S5 is involved in control of translational fidelity.

Its subcellular location is the plastid. The protein localises to the chloroplast. Its function is as follows. One of the primary rRNA binding proteins, it binds directly to 16S rRNA where it nucleates assembly of the body of the 30S subunit. Functionally, with S5 and S12 plays an important role in translational accuracy. In Sorghum bicolor (Sorghum), this protein is Small ribosomal subunit protein uS4c (rps4).